A 452-amino-acid chain; its full sequence is MASTTSVRQFSTSGSVKGLCAPGMGFSRMSSVRVGGACRAPSLLGGGSCGNMSVTSSRFSAGLGGGYGGGYTCSLGGGFGSSFGVSDALLGGSEKETMQNLNDRLATYLDRVRALEEANADLEVKIREWYKKQGPGPARDYSPYFKTIEDLRNKILAATIDNASIVLQIDNARLAADDFRTKYETELNLRMSVEADINGLRRVLDELTLARADLEMQIESLKEELAYLRKNHEEEMNALRGQVGGDVNVEMDAAPGVDLSRILNEMRDQYEKMAEKNRKDAEEWFFTKTEELNREVATNTEALQSSRTEITELRRSVQNLEIELQSQLSMKASLENSLAETEARYGAQLAQLQGLISSVEQQLCELRCDMERQNHEYQVLLDVKTRLEQEIATYRRLLEGEDAHLATQYSSSLASQPSREGMVTSRQVRTIVEEVQDGKVVSSREQVHRSTH.

Residues 4–93 are head; that stretch reads TTSVRQFSTS…GVSDALLGGS (90 aa). The tract at residues 94 to 129 is coil 1A; that stretch reads EKETMQNLNDRLATYLDRVRALEEANADLEVKIREW. One can recognise an IF rod domain in the interval 94–405; that stretch reads EKETMQNLND…RLLEGEDAHL (312 aa). A linker 1 region spans residues 130 to 147; that stretch reads YKKQGPGPARDYSPYFKT. The segment at 148 to 239 is coil 1B; the sequence is IEDLRNKILA…KNHEEEMNAL (92 aa). Positions 240 to 262 are linker 12; it reads RGQVGGDVNVEMDAAPGVDLSRI. The segment at 263 to 401 is coil 2; that stretch reads LNEMRDQYEK…ATYRRLLEGE (139 aa). The tail stretch occupies residues 402–452; sequence DAHLATQYSSSLASQPSREGMVTSRQVRTIVEEVQDGKVVSSREQVHRSTH.

This sequence belongs to the intermediate filament family. As to quaternary structure, heterodimer of a type I and a type II keratin. Colocalizes with KRT8/KRT18 filament network. As to expression, expressed in nail matrix and nail bed epithelium (at protein level). Also expressed in tongue and digits with weak expression in vibrissae and in both filiform and fungiform papillae of oral mucosa.

It localises to the cytoplasm. This chain is Keratin, type I cytoskeletal 42, found in Mus musculus (Mouse).